We begin with the raw amino-acid sequence, 348 residues long: tRNA N6-adenosine threonylcarbamoyltransferase (348 aa).

Residues H116 and H120 each coordinate Fe cation. Substrate contacts are provided by residues 138–142 (IISGG), D171, G184, and N282. D310 lines the Fe cation pocket.

The protein belongs to the KAE1 / TsaD family. The cofactor is Fe(2+).

It is found in the cytoplasm. It carries out the reaction L-threonylcarbamoyladenylate + adenosine(37) in tRNA = N(6)-L-threonylcarbamoyladenosine(37) in tRNA + AMP + H(+). Its function is as follows. Required for the formation of a threonylcarbamoyl group on adenosine at position 37 (t(6)A37) in tRNAs that read codons beginning with adenine. Is involved in the transfer of the threonylcarbamoyl moiety of threonylcarbamoyl-AMP (TC-AMP) to the N6 group of A37, together with TsaE and TsaB. TsaD likely plays a direct catalytic role in this reaction. In Ehrlichia ruminantium (strain Gardel), this protein is tRNA N6-adenosine threonylcarbamoyltransferase.